The primary structure comprises 166 residues: Small ribosomal subunit protein uS5 (166 aa).

The region spanning 11 to 74 (LQEKLIAVNR…EKARRNMINV (64 aa)) is the S5 DRBM domain.

The protein belongs to the universal ribosomal protein uS5 family. As to quaternary structure, part of the 30S ribosomal subunit. Contacts proteins S4 and S8.

With S4 and S12 plays an important role in translational accuracy. Functionally, located at the back of the 30S subunit body where it stabilizes the conformation of the head with respect to the body. The chain is Small ribosomal subunit protein uS5 from Mannheimia succiniciproducens (strain KCTC 0769BP / MBEL55E).